Here is a 254-residue protein sequence, read N- to C-terminus: MTGAVTSAYWLAAVAFLIGVGITAALYAKLEGSRARTRLAALAVIPGFAGLSYVGMALGIGTVTVNGAELVGLRYVDWVVTTPLLVGFIGYNAGASRRAIAGVMIADALMIVFGAAAVVSGGTLKWALFGVSALFHVSLFAYLYVIFPGGIPDDPMQRGLFSLLKNHVGLLWLAYPFVWLMGPAGIGFTGAVGAALTYAFLDVLAKVPYVYFFYARRQAFIDVTDSRAAAKGDGPAVGGEAPVATGDDAPTAAD.

At 1–4 (MTGA) the chain is on the extracellular side. The chain crosses the membrane as a helical span at residues 5 to 26 (VTSAYWLAAVAFLIGVGITAAL). At 27 to 35 (YAKLEGSRA) the chain is on the cytoplasmic side. A helical transmembrane segment spans residues 36-57 (RTRLAALAVIPGFAGLSYVGMA). Over 58 to 71 (LGIGTVTVNGAELV) the chain is Extracellular. A helical transmembrane segment spans residues 72–93 (GLRYVDWVVTTPLLVGFIGYNA). Residues 94 to 96 (GAS) lie on the Cytoplasmic side of the membrane. The chain crosses the membrane as a helical span at residues 97-119 (RRAIAGVMIADALMIVFGAAAVV). At 120–123 (SGGT) the chain is on the extracellular side. The chain crosses the membrane as a helical span at residues 124–151 (LKWALFGVSALFHVSLFAYLYVIFPGGI). Topologically, residues 152–154 (PDD) are cytoplasmic. A helical transmembrane segment spans residues 155 to 182 (PMQRGLFSLLKNHVGLLWLAYPFVWLMG). At 183-190 (PAGIGFTG) the chain is on the extracellular side. Residues 191–223 (AVGAALTYAFLDVLAKVPYVYFFYARRQAFIDV) traverse the membrane as a helical segment. The residue at position 206 (K206) is an N6-(retinylidene)lysine. The Cytoplasmic segment spans residues 224–254 (TDSRAAAKGDGPAVGGEAPVATGDDAPTAAD). The disordered stretch occupies residues 231-254 (KGDGPAVGGEAPVATGDDAPTAAD).

This sequence belongs to the archaeal/bacterial/fungal opsin family.

The protein resides in the cell membrane. In terms of biological role, involved in the control of phototaxis. The chain is Sensory rhodopsin (sop) from Halorubrum sodomense.